The sequence spans 190 residues: MGKSQSKLSQDQLQDLVRSTRFDKKELQQWYKGFFKDCPSGHLNKSEFQKIYKQFFPFGDPSAFAEYVFNVFDADKNGYIDFKEFICALSVTSRGELNDKLIWAFQLYDLDNNGLISYDEMLRIVDAIYKMVGSMVKLPEDEDTPEKRVNKIFNMMDKNKDGQLTLEEFCEGSKRDPTIVSALSLYDGLV.

A lipid anchor (N-myristoyl glycine) is attached at Gly-2. EF-hand domains follow at residues 40–58 (SGHL…FFPF), 60–95 (DPSA…TSRG), 96–131 (ELND…IYKM), and 144–179 (TPEK…DPTI). 14 residues coordinate Ca(2+): Asp-73, Asp-75, Asn-77, Tyr-79, Glu-84, Asp-109, Asp-111, Asn-113, Glu-120, Asp-157, Asn-159, Asp-161, Gln-163, and Glu-168.

Belongs to the recoverin family.

It localises to the membrane. Functionally, negatively regulates sporulation perhaps by controlling Ca(2+)-dependent desensitization of git3. The polypeptide is Calcium-binding protein NCS-1 (ncs1) (Schizosaccharomyces pombe (strain 972 / ATCC 24843) (Fission yeast)).